The sequence spans 62 residues: Negative regulatory protein YxlE (62 aa).

The next 2 helical transmembrane spans lie at 7-27 and 37-57; these read MILP…ISCI and WMWA…FFTV.

It localises to the cell membrane. Its function is as follows. Together with YxlD is important for negative regulation of sigma Y activity. This Bacillus subtilis (strain 168) protein is Negative regulatory protein YxlE (yxlE).